The primary structure comprises 158 residues: SsrA-binding protein (158 aa).

Positions 131-158 (GKKTHDKRETEKKRDWNREKARLLRDRG) are disordered. A compositionally biased stretch (basic and acidic residues) spans 136 to 158 (DKRETEKKRDWNREKARLLRDRG).

The protein belongs to the SmpB family.

The protein resides in the cytoplasm. Required for rescue of stalled ribosomes mediated by trans-translation. Binds to transfer-messenger RNA (tmRNA), required for stable association of tmRNA with ribosomes. tmRNA and SmpB together mimic tRNA shape, replacing the anticodon stem-loop with SmpB. tmRNA is encoded by the ssrA gene; the 2 termini fold to resemble tRNA(Ala) and it encodes a 'tag peptide', a short internal open reading frame. During trans-translation Ala-aminoacylated tmRNA acts like a tRNA, entering the A-site of stalled ribosomes, displacing the stalled mRNA. The ribosome then switches to translate the ORF on the tmRNA; the nascent peptide is terminated with the 'tag peptide' encoded by the tmRNA and targeted for degradation. The ribosome is freed to recommence translation, which seems to be the essential function of trans-translation. The sequence is that of SsrA-binding protein from Brucella abortus biovar 1 (strain 9-941).